We begin with the raw amino-acid sequence, 197 residues long: Recombination protein RecR (197 aa).

The segment at 56–71 adopts a C4-type zinc-finger fold; it reads CRLCNNFSEAEVCEVC. The Toprim domain maps to 79–174; the sequence is RQLAVVEMPA…KVSRLARGVP (96 aa).

The protein belongs to the RecR family.

Functionally, may play a role in DNA repair. It seems to be involved in an RecBC-independent recombinational process of DNA repair. It may act with RecF and RecO. The chain is Recombination protein RecR from Thiobacillus denitrificans (strain ATCC 25259 / T1).